The chain runs to 111 residues: Large ribosomal subunit protein uL22 (111 aa).

It belongs to the universal ribosomal protein uL22 family. As to quaternary structure, part of the 50S ribosomal subunit.

Functionally, this protein binds specifically to 23S rRNA; its binding is stimulated by other ribosomal proteins, e.g. L4, L17, and L20. It is important during the early stages of 50S assembly. It makes multiple contacts with different domains of the 23S rRNA in the assembled 50S subunit and ribosome. Its function is as follows. The globular domain of the protein is located near the polypeptide exit tunnel on the outside of the subunit, while an extended beta-hairpin is found that lines the wall of the exit tunnel in the center of the 70S ribosome. The polypeptide is Large ribosomal subunit protein uL22 (Wigglesworthia glossinidia brevipalpis).